We begin with the raw amino-acid sequence, 222 residues long: UPF0128 protein PF1488 (222 aa).

It belongs to the UPF0128 family.

The polypeptide is UPF0128 protein PF1488 (Pyrococcus furiosus (strain ATCC 43587 / DSM 3638 / JCM 8422 / Vc1)).